Consider the following 190-residue polypeptide: NADH-quinone oxidoreductase subunit B (190 aa).

Cys-67, Cys-68, Cys-132, and Cys-162 together coordinate [4Fe-4S] cluster.

Belongs to the complex I 20 kDa subunit family. In terms of assembly, NDH-1 is composed of 14 different subunits. Subunits NuoB, C, D, E, F, and G constitute the peripheral sector of the complex. [4Fe-4S] cluster is required as a cofactor.

Its subcellular location is the cell inner membrane. It catalyses the reaction a quinone + NADH + 5 H(+)(in) = a quinol + NAD(+) + 4 H(+)(out). In terms of biological role, NDH-1 shuttles electrons from NADH, via FMN and iron-sulfur (Fe-S) centers, to quinones in the respiratory chain. The immediate electron acceptor for the enzyme in this species is believed to be ubiquinone. Couples the redox reaction to proton translocation (for every two electrons transferred, four hydrogen ions are translocated across the cytoplasmic membrane), and thus conserves the redox energy in a proton gradient. This chain is NADH-quinone oxidoreductase subunit B, found in Anaplasma marginale (strain Florida).